A 214-amino-acid polypeptide reads, in one-letter code: MRIILLGAPGAGKGTQAKIISEKLNIPHVSTGDIFRANIKGNTPLGQKAKEYMDKGELVPDELTVEIVKDRLGNVDCVNGFILDGFPRTIPQAEYLDKVLVQMNINLDVALLIDVKDEDIIKRMSGRRVCTNCGATYNVVFNPTKVEGICDVCNSPVIQRADDAAETVLNRLETYHKQTQPLINYYEKAGKLKVAEGAGEVDETSKRVMKALGI.

Residue 10–15 participates in ATP binding; sequence GAGKGT. Residues 30 to 59 are NMP; sequence STGDIFRANIKGNTPLGQKAKEYMDKGELV. Residues Thr31, Arg36, 57-59, 85-88, and Gln92 each bind AMP; these read ELV and GFPR. The segment at 126–163 is LID; the sequence is GRRVCTNCGATYNVVFNPTKVEGICDVCNSPVIQRADD. Arg127 lines the ATP pocket. Residues Cys130 and Cys133 each contribute to the Zn(2+) site. 136–137 is a binding site for ATP; it reads TY. Residues Cys150 and Cys153 each contribute to the Zn(2+) site. Positions 160 and 171 each coordinate AMP. Residue Gly199 participates in ATP binding.

This sequence belongs to the adenylate kinase family. As to quaternary structure, monomer.

It is found in the cytoplasm. It carries out the reaction AMP + ATP = 2 ADP. It functions in the pathway purine metabolism; AMP biosynthesis via salvage pathway; AMP from ADP: step 1/1. Catalyzes the reversible transfer of the terminal phosphate group between ATP and AMP. Plays an important role in cellular energy homeostasis and in adenine nucleotide metabolism. This is Adenylate kinase from Ruminiclostridium cellulolyticum (strain ATCC 35319 / DSM 5812 / JCM 6584 / H10) (Clostridium cellulolyticum).